Reading from the N-terminus, the 397-residue chain is Lysophospholipid transporter LplT (397 aa).

Over 1 to 17 (MSESVHTNTSLWSKGMK) the chain is Periplasmic. Residues 18 to 38 (AVIVAQFLSAFGDNALLFATL) form a helical membrane-spanning segment. The Cytoplasmic segment spans residues 39–52 (ALLKAQFYPEWSQP). A helical transmembrane segment spans residues 53–73 (ILQMVFVGAYILFAPFVGQVA). At 74–90 (DSFAKGRVMMFANGLKL) the chain is on the periplasmic side. Residues 91–111 (LGAASICFGINPFLGYTLVGV) traverse the membrane as a helical segment. Residues 112–144 (GAAAYSPAKYGILGELTTGSKLVKANGLMEAST) are Cytoplasmic-facing. A helical transmembrane segment spans residues 145-165 (IAAILLGSVAGGVLADWHILV). Residue Ala-166 is a topological domain, periplasmic. A helical membrane pass occupies residues 167-187 (LVACALAYGGAVVANIYIPKL). The Cytoplasmic portion of the chain corresponds to 188-226 (AAARPGQSWNLISMTRSFLNACTSLWRNGETRFSLVGTS). A helical transmembrane segment spans residues 227-247 (LFWGAGVTLRFLLVLWVPVAL). The Periplasmic segment spans residues 248 to 256 (GITDNATPT). Residues 257 to 277 (YLNAMVAIGIVVGAGAAAKLV) form a helical membrane-spanning segment. Topologically, residues 278 to 280 (TLE) are cytoplasmic. Residues 281–301 (TVSRCMPAGILIGVVVLIFSL) form a helical membrane-spanning segment. Residues 302-304 (QHE) lie on the Periplasmic side of the membrane. Residues 305-325 (LLPAYALLMLIGVLGGFFVVP) form a helical membrane-spanning segment. The Cytoplasmic segment spans residues 326 to 343 (LNALLQERGKKSVGAGNA). Residues 344 to 364 (IAVQNLGENSAMLLMLGIYSL) traverse the membrane as a helical segment. The Periplasmic segment spans residues 365–366 (AV). The helical transmembrane segment at 367-387 (MVGIPVVPIGIGFGALFALAI) threads the bilayer. The Cytoplasmic portion of the chain corresponds to 388 to 397 (TALWIWQRRH).

This sequence belongs to the major facilitator superfamily. LplT (TC 2.A.1.42) family.

The protein localises to the cell inner membrane. Functionally, catalyzes the facilitated diffusion of 2-acyl-glycero-3-phosphoethanolamine (2-acyl-GPE) into the cell. This Escherichia coli O81 (strain ED1a) protein is Lysophospholipid transporter LplT.